Reading from the N-terminus, the 514-residue chain is Carboxysome shell carbonic anhydrase (514 aa).

The interval 1–27 is disordered; sequence MAYRNRNLASQTQRPLAPTAPRRRPVV. C175 is a binding site for Zn(2+). Catalysis depends on D177, which acts as the Proton acceptor. Zn(2+) contacts are provided by H243 and C254.

Belongs to the beta-class carbonic anhydrase family. CsoSCA subfamily. In terms of assembly, homodimer. Zn(2+) serves as cofactor.

Its subcellular location is the carboxysome. It carries out the reaction hydrogencarbonate + H(+) = CO2 + H2O. Reversible hydration of carbon dioxide. Essential for photosynthetic carbon dioxide fixation, supplies CO(2) to RuBisCO (ribulose bisphosphate carboxylase, cbbL-cbbS) in the carboxysome. This chain is Carboxysome shell carbonic anhydrase, found in Prochlorococcus marinus (strain MIT 9313).